We begin with the raw amino-acid sequence, 622 residues long: Protein FAM234B (622 aa).

The disordered stretch occupies residues 1 to 68 (MATVLSRALK…EPDSDAEVAE (68 aa)). Position 16 is a phosphoserine (serine 16). Threonine 26 bears the Phosphothreonine mark. A phosphoserine mark is found at serine 30, serine 33, and serine 62. The helical transmembrane segment at 104–124 (TSVFLLTLGISMILVLLCAFL) threads the bilayer.

The protein belongs to the FAM234 family.

It localises to the membrane. Its subcellular location is the golgi outpost. The protein resides in the cytoplasm. The protein localises to the cytoskeleton. It is found in the microtubule organizing center. The chain is Protein FAM234B from Homo sapiens (Human).